We begin with the raw amino-acid sequence, 618 residues long: Alpha-dioxygenase PIOX (618 aa).

The active-site Proton acceptor is histidine 157. Position 158 (aspartate 158) interacts with Ca(2+). Residue histidine 162 coordinates heme b. Ca(2+) is bound by residues threonine 210, tryptophan 212, aspartate 214, and serine 216. Hexadecanoate is bound at residue histidine 311. Heme b is bound by residues histidine 382, arginine 479, and arginine 483. Position 599 (glutamate 599) interacts with hexadecanoate.

This sequence belongs to the peroxidase family. Heme b serves as cofactor. It depends on Ca(2+) as a cofactor.

The catalysed reaction is a 1,2-saturated fatty acid + O2 = a (2R)-2-hydroperoxy fatty acid. It catalyses the reaction (9Z,12Z)-octadecadienoate + O2 = (2R,9Z,12Z)-2-hydroperoxyoctadecadienoate. The enzyme catalyses hexadecanoate + O2 = (2R)-2-hydroperoxyhexadecanoate. It carries out the reaction (9Z,12Z,15Z)-octadecatrienoate + O2 = (R)-2-hydroperoxy-(9Z,12Z,15Z)-octadecatrienoate. The catalysed reaction is tetradecanoate + O2 = (2R)-2-hydroperoxytetradecanoate. It catalyses the reaction octadecanoate + O2 = (2R)-2-hydroperoxyoctadecanoate. The enzyme catalyses (9Z)-octadecenoate + O2 = (2R,9Z)-2-hydroperoxyoctadecenoate. In terms of biological role, alpha-dioxygenase that catalyzes the primary oxygenation step of a variety of 14-20 carbon fatty acids, containing up to three unsaturated bonds, into their corresponding 2R-hydroperoxides. Involved in the production of oxylipins that function in cell signaling, wound healing, and protection from infection. The polypeptide is Alpha-dioxygenase PIOX (Oryza sativa subsp. japonica (Rice)).